The chain runs to 217 residues: Octanoyltransferase (217 aa).

The BPL/LPL catalytic domain occupies 32–207 (NDSPDELWIV…TLSQLLGYQH (176 aa)). Residues 71–78 (RGGQVTYH), 138–140 (SLG), and 151–153 (GLA) contribute to the substrate site. Cys169 (acyl-thioester intermediate) is an active-site residue.

The protein belongs to the LipB family.

The protein resides in the cytoplasm. It carries out the reaction octanoyl-[ACP] + L-lysyl-[protein] = N(6)-octanoyl-L-lysyl-[protein] + holo-[ACP] + H(+). It functions in the pathway protein modification; protein lipoylation via endogenous pathway; protein N(6)-(lipoyl)lysine from octanoyl-[acyl-carrier-protein]: step 1/2. Functionally, catalyzes the transfer of endogenously produced octanoic acid from octanoyl-acyl-carrier-protein onto the lipoyl domains of lipoate-dependent enzymes. Lipoyl-ACP can also act as a substrate although octanoyl-ACP is likely to be the physiological substrate. In Shewanella oneidensis (strain ATCC 700550 / JCM 31522 / CIP 106686 / LMG 19005 / NCIMB 14063 / MR-1), this protein is Octanoyltransferase.